The chain runs to 440 residues: Ribosomal protein uS12 methylthiotransferase RimO (440 aa).

The MTTase N-terminal domain occupies 8–125; that stretch reads LRCHAISLGC…WNEQILLALN (118 aa). [4Fe-4S] cluster is bound by residues cysteine 17, cysteine 52, cysteine 87, cysteine 152, cysteine 156, and cysteine 159. Residues 138 to 368 form the Radical SAM core domain; the sequence is TTGKSYAWLK…MEIQLKISEK (231 aa). Positions 371-439 constitute a TRAM domain; it reads KNFVGKRLSL…SYDLVALADS (69 aa).

It belongs to the methylthiotransferase family. RimO subfamily. [4Fe-4S] cluster serves as cofactor.

It is found in the cytoplasm. The catalysed reaction is L-aspartate(89)-[ribosomal protein uS12]-hydrogen + (sulfur carrier)-SH + AH2 + 2 S-adenosyl-L-methionine = 3-methylsulfanyl-L-aspartate(89)-[ribosomal protein uS12]-hydrogen + (sulfur carrier)-H + 5'-deoxyadenosine + L-methionine + A + S-adenosyl-L-homocysteine + 2 H(+). Its function is as follows. Catalyzes the methylthiolation of an aspartic acid residue of ribosomal protein uS12. In Lawsonia intracellularis (strain PHE/MN1-00), this protein is Ribosomal protein uS12 methylthiotransferase RimO.